A 122-amino-acid chain; its full sequence is Large ribosomal subunit protein uL14 (122 aa).

This sequence belongs to the universal ribosomal protein uL14 family. As to quaternary structure, part of the 50S ribosomal subunit. Forms a cluster with proteins L3 and L19. In the 70S ribosome, L14 and L19 interact and together make contacts with the 16S rRNA in bridges B5 and B8.

Its function is as follows. Binds to 23S rRNA. Forms part of two intersubunit bridges in the 70S ribosome. This is Large ribosomal subunit protein uL14 from Chlorobium chlorochromatii (strain CaD3).